The primary structure comprises 102 residues: Large ribosomal subunit protein uL24 (102 aa).

The segment at 1–22 (MHVKKGDTVQVMSGKDKGKQGV) is disordered.

Belongs to the universal ribosomal protein uL24 family. Part of the 50S ribosomal subunit.

Functionally, one of two assembly initiator proteins, it binds directly to the 5'-end of the 23S rRNA, where it nucleates assembly of the 50S subunit. In terms of biological role, one of the proteins that surrounds the polypeptide exit tunnel on the outside of the subunit. This chain is Large ribosomal subunit protein uL24, found in Exiguobacterium sp. (strain ATCC BAA-1283 / AT1b).